The chain runs to 435 residues: Sulfopropanediol 3-dehydrogenase (435 aa).

NAD(+) is bound by residues Tyr119, Gln181, and Asn204. 2 residues coordinate Zn(2+): Gln249 and His252. Residues Glu319 and His320 each act as proton acceptor in the active site. Residues Asp353 and His412 each contribute to the Zn(2+) site.

This sequence belongs to the histidinol dehydrogenase family. HpsN subfamily. It depends on Zn(2+) as a cofactor.

The enzyme catalyses (2R)-3-sulfopropanediol + 2 NAD(+) + H2O = (2R)-3-sulfolactate + 2 NADH + 3 H(+). In terms of biological role, catalyzes the NAD-dependent oxidation of (R)-2,3-dihydroxypropane-1-sulfonate to (R)-3-sulfolactate. The polypeptide is Sulfopropanediol 3-dehydrogenase (Ruegeria pomeroyi (strain ATCC 700808 / DSM 15171 / DSS-3) (Silicibacter pomeroyi)).